We begin with the raw amino-acid sequence, 561 residues long: Oligo-1,6-glucosidase (561 aa).

Catalysis depends on Asp199, which acts as the Nucleophile. Catalysis depends on Glu256, which acts as the Proton donor.

This sequence belongs to the glycosyl hydrolase 13 family.

Its subcellular location is the cytoplasm. It carries out the reaction Hydrolysis of (1-&gt;6)-alpha-D-glucosidic linkages in some oligosaccharides produced from starch and glycogen by alpha-amylase, and in isomaltose.. The polypeptide is Oligo-1,6-glucosidase (malL) (Halalkalibacterium halodurans (strain ATCC BAA-125 / DSM 18197 / FERM 7344 / JCM 9153 / C-125) (Bacillus halodurans)).